The chain runs to 90 residues: MAVKIRLKRMGAKKSPFYRIVVADSRSPRDGRFIETVGTYNPVAKPAEVKINEELALKWLQTGAKPSDTVRNLFSSQGIMEKFHNAKQGK.

Belongs to the bacterial ribosomal protein bS16 family.

In Bacillus velezensis (strain DSM 23117 / BGSC 10A6 / LMG 26770 / FZB42) (Bacillus amyloliquefaciens subsp. plantarum), this protein is Small ribosomal subunit protein bS16.